Reading from the N-terminus, the 725-residue chain is Catalase-peroxidase (725 aa).

Residues 98–226 (WHMAGSYRTS…LAAVQMGLIY (129 aa)) constitute a cross-link (tryptophyl-tyrosyl-methioninium (Trp-Tyr) (with M-252)). H99 serves as the catalytic Proton acceptor. Positions 226-252 (YVNPEGVNGKSDPQATAYQMRETFARM) form a cross-link, tryptophyl-tyrosyl-methioninium (Tyr-Met) (with W-98). H267 is a binding site for heme b.

This sequence belongs to the peroxidase family. Peroxidase/catalase subfamily. Homodimer or homotetramer. Requires heme b as cofactor. Formation of the three residue Trp-Tyr-Met cross-link is important for the catalase, but not the peroxidase activity of the enzyme.

The catalysed reaction is H2O2 + AH2 = A + 2 H2O. The enzyme catalyses 2 H2O2 = O2 + 2 H2O. Bifunctional enzyme with both catalase and broad-spectrum peroxidase activity. This is Catalase-peroxidase from Paracoccus denitrificans (strain Pd 1222).